The chain runs to 130 residues: Small ribosomal subunit protein uS11 (130 aa).

It belongs to the universal ribosomal protein uS11 family. Part of the 30S ribosomal subunit. Interacts with proteins S7 and S18. Binds to IF-3.

Located on the platform of the 30S subunit, it bridges several disparate RNA helices of the 16S rRNA. Forms part of the Shine-Dalgarno cleft in the 70S ribosome. The polypeptide is Small ribosomal subunit protein uS11 (Shewanella violacea (strain JCM 10179 / CIP 106290 / LMG 19151 / DSS12)).